A 342-amino-acid chain; its full sequence is Oxygen-dependent coproporphyrinogen-III oxidase (342 aa).

Substrate is bound at residue Ser98. 2 residues coordinate a divalent metal cation: His102 and His112. His112 functions as the Proton donor in the catalytic mechanism. 114–116 lines the substrate pocket; sequence NYR. Residues His146 and His176 each coordinate a divalent metal cation. An important for dimerization region spans residues 266-301; sequence YVEFNLVWDRGTIFGLQTNGRTESILMSLPPLARWE.

It belongs to the aerobic coproporphyrinogen-III oxidase family. Homodimer. A divalent metal cation serves as cofactor.

The protein resides in the cytoplasm. It catalyses the reaction coproporphyrinogen III + O2 + 2 H(+) = protoporphyrinogen IX + 2 CO2 + 2 H2O. It functions in the pathway porphyrin-containing compound metabolism; protoporphyrin-IX biosynthesis; protoporphyrinogen-IX from coproporphyrinogen-III (O2 route): step 1/1. Involved in the heme and chlorophyll biosynthesis. Catalyzes the aerobic oxidative decarboxylation of propionate groups of rings A and B of coproporphyrinogen-III to yield the vinyl groups in protoporphyrinogen-IX. This Prochlorococcus marinus (strain MIT 9301) protein is Oxygen-dependent coproporphyrinogen-III oxidase.